Here is a 517-residue protein sequence, read N- to C-terminus: Acetylcholine receptor subunit delta (517 aa).

The N-terminal stretch at 1–21 (MEGPVLTLGLLAALAVCGSWG) is a signal peptide. The Extracellular portion of the chain corresponds to 22–245 (LNEEERLIRH…ITFYLIIRRK (224 aa)). N-linked (GlcNAc...) asparagine glycosylation is found at Asn97 and Asn164. Cys151 and Cys165 are joined by a disulfide. 3 helical membrane passes run 246-270 (PLFY…VFYL), 278-299 (TSVA…SKRL), and 312-333 (FLLF…VLNI). Residues 334-471 (HFRTPSTHVL…WNRVARTVDR (138 aa)) are Cytoplasmic-facing. A Phosphotyrosine; by Tyr-kinases modification is found at Tyr390. Residues 472 to 490 (LCLFVVTPVMVVGTAWIFL) form a helical membrane-spanning segment.

Belongs to the ligand-gated ion channel (TC 1.A.9) family. Acetylcholine receptor (TC 1.A.9.1) subfamily. Delta/CHRND sub-subfamily. Pentamer of two alpha chains, and one each of the beta, delta, and gamma (in immature muscle) or epsilon (in mature muscle) chains. The muscle heteropentamer composed of alpha-1, beta-1, delta, epsilon subunits interacts with the alpha-conotoxin ImII.

The protein localises to the postsynaptic cell membrane. Its subcellular location is the cell membrane. The enzyme catalyses K(+)(in) = K(+)(out). It carries out the reaction Na(+)(in) = Na(+)(out). In terms of biological role, after binding acetylcholine, the AChR responds by an extensive change in conformation that affects all subunits and leads to opening of an ion-conducting channel across the plasma membrane. This chain is Acetylcholine receptor subunit delta, found in Homo sapiens (Human).